Here is a 454-residue protein sequence, read N- to C-terminus: Bifunctional protein GlmU (454 aa).

Residues 1 to 230 (MSGRFAVILA…LSETMGVNDR (230 aa)) form a pyrophosphorylase region. Residues 9-12 (LAAG), Lys-23, Gln-73, and 78-79 (GT) contribute to the UDP-N-acetyl-alpha-D-glucosamine site. Residue Asp-103 coordinates Mg(2+). UDP-N-acetyl-alpha-D-glucosamine-binding residues include Gly-140, Glu-155, Asn-170, and Asn-228. Residue Asn-228 coordinates Mg(2+). The interval 231–251 (VALSQAEAAMRKRINEEWMRQ) is linker. The tract at residues 252–454 (GVTIIDPQTT…NKDNYVKKDV (203 aa)) is N-acetyltransferase. UDP-N-acetyl-alpha-D-glucosamine-binding residues include Arg-333 and Lys-351. His-363 serves as the catalytic Proton acceptor. Residues Tyr-366 and Asn-377 each coordinate UDP-N-acetyl-alpha-D-glucosamine. Acetyl-CoA is bound by residues 386-387 (NY), Ser-405, Ala-423, and Arg-440.

In the N-terminal section; belongs to the N-acetylglucosamine-1-phosphate uridyltransferase family. It in the C-terminal section; belongs to the transferase hexapeptide repeat family. Homotrimer. The cofactor is Mg(2+).

Its subcellular location is the cytoplasm. It catalyses the reaction alpha-D-glucosamine 1-phosphate + acetyl-CoA = N-acetyl-alpha-D-glucosamine 1-phosphate + CoA + H(+). The catalysed reaction is N-acetyl-alpha-D-glucosamine 1-phosphate + UTP + H(+) = UDP-N-acetyl-alpha-D-glucosamine + diphosphate. It participates in nucleotide-sugar biosynthesis; UDP-N-acetyl-alpha-D-glucosamine biosynthesis; N-acetyl-alpha-D-glucosamine 1-phosphate from alpha-D-glucosamine 6-phosphate (route II): step 2/2. It functions in the pathway nucleotide-sugar biosynthesis; UDP-N-acetyl-alpha-D-glucosamine biosynthesis; UDP-N-acetyl-alpha-D-glucosamine from N-acetyl-alpha-D-glucosamine 1-phosphate: step 1/1. Its pathway is bacterial outer membrane biogenesis; LPS lipid A biosynthesis. Functionally, catalyzes the last two sequential reactions in the de novo biosynthetic pathway for UDP-N-acetylglucosamine (UDP-GlcNAc). The C-terminal domain catalyzes the transfer of acetyl group from acetyl coenzyme A to glucosamine-1-phosphate (GlcN-1-P) to produce N-acetylglucosamine-1-phosphate (GlcNAc-1-P), which is converted into UDP-GlcNAc by the transfer of uridine 5-monophosphate (from uridine 5-triphosphate), a reaction catalyzed by the N-terminal domain. The polypeptide is Bifunctional protein GlmU (Shouchella clausii (strain KSM-K16) (Alkalihalobacillus clausii)).